Consider the following 496-residue polypeptide: MLKIKLEKTTFENTKAECGLVFIVNKDFSHAWVKNKELLETFKYESEGVFLDQENKILYVGVKEDDVHLLRESACLAVRTLKKLAFKSVKVGVYTCGTHSKDNALLENLKALFLGLKLGLYEYDTFKSNKKESVLKEAIVALELHKPCEKTCANSLEKNAKEALKYAEIMTESLNIVKDLVNTPPMIGTPVYMAEVAQKVAKENHLEIHVHDEKFLEEKKMNAFLAVNKASLGVNPPRLIHLVYKPKKAKKKIALVGKGLTYDCGGLSLKPADYMVTMKADKGGGSAVIGLLNALAKLGVEAEVHGIIGATENMIGPAAYKPDDILISKEGKSIEVRNTDAEGRLVLADCLSYAQDLNPDVIVDFATLTGACVVGLGEFTSAIMGHNEELKNLFETSGLESGELLAKLPFNRHLKKLIESKIADVCNISSSRYGGAITAGLFLNEFIRDEFKDKWLHIDIAGPAYVEKEWDVNSFGASGAGVRACTAFVEELLKKA.

Residues Lys258 and Asp263 each contribute to the Mn(2+) site. Lys270 is a catalytic residue. Mn(2+)-binding residues include Asp281, Asp340, and Glu342. Arg344 is a catalytic residue.

This sequence belongs to the peptidase M17 family. Mn(2+) serves as cofactor.

It is found in the cytoplasm. It catalyses the reaction Release of an N-terminal amino acid, Xaa-|-Yaa-, in which Xaa is preferably Leu, but may be other amino acids including Pro although not Arg or Lys, and Yaa may be Pro. Amino acid amides and methyl esters are also readily hydrolyzed, but rates on arylamides are exceedingly low.. It carries out the reaction Release of an N-terminal amino acid, preferentially leucine, but not glutamic or aspartic acids.. In terms of biological role, presumably involved in the processing and regular turnover of intracellular proteins. Catalyzes the removal of unsubstituted N-terminal amino acids from various peptides. The chain is Probable cytosol aminopeptidase from Helicobacter pylori (strain P12).